The following is a 264-amino-acid chain: Thymidylate synthase (264 aa).

Arg21 contacts dUMP. His51 is a binding site for (6R)-5,10-methylene-5,6,7,8-tetrahydrofolate. 126–127 (RR) is a binding site for dUMP. Cys146 acts as the Nucleophile in catalysis. DUMP contacts are provided by residues 166–169 (RSAD), Asn177, and 207–209 (HLY). (6R)-5,10-methylene-5,6,7,8-tetrahydrofolate is bound at residue Asp169. Ala263 is a binding site for (6R)-5,10-methylene-5,6,7,8-tetrahydrofolate.

This sequence belongs to the thymidylate synthase family. Bacterial-type ThyA subfamily. Homodimer.

It localises to the cytoplasm. The enzyme catalyses dUMP + (6R)-5,10-methylene-5,6,7,8-tetrahydrofolate = 7,8-dihydrofolate + dTMP. It participates in pyrimidine metabolism; dTTP biosynthesis. Catalyzes the reductive methylation of 2'-deoxyuridine-5'-monophosphate (dUMP) to 2'-deoxythymidine-5'-monophosphate (dTMP) while utilizing 5,10-methylenetetrahydrofolate (mTHF) as the methyl donor and reductant in the reaction, yielding dihydrofolate (DHF) as a by-product. This enzymatic reaction provides an intracellular de novo source of dTMP, an essential precursor for DNA biosynthesis. This chain is Thymidylate synthase, found in Hyphomonas neptunium (strain ATCC 15444).